Reading from the N-terminus, the 380-residue chain is MASLLGAYPWTEGLECPALEAELSDGLSPPAVPRPSGDKSSESRIRRPMNAFMVWAKDERKRLAVQNPDLHNAELSKMLGKSWKALTLSQKRPYVDEAERLRLQHMQDYPNYKYRPRRKKQGKRLCKRVDPGFLLSSLSRDQNTLPEKNGIGRGEKEDRGEYSPGATLPGLHSCYREGAAAAPGSVDTYPYGLPTPPEMSPLDALEPEQTFFSSSCQEEHGHPHHLPHLPGPPYSPEFTPSPLHCSHPLGSLALGQSPGVSMMSSVSGCPPSPAYYSHATYHPLHPNLQAHLGQLSPPPEHPGFDTLDQLSQVELLGDMDRNEFDQYLNTPGHPDSAAGVGTLTGHVPLSQGTPTGPTETSLISVLADATATYYNSYSVS.

A disordered region spans residues 24–43 (SDGLSPPAVPRPSGDKSSES). Positions 45–113 (IRRPMNAFMV…QHMQDYPNYK (69 aa)) form a DNA-binding region, HMG box. The interval 139 to 167 (SRDQNTLPEKNGIGRGEKEDRGEYSPGAT) is disordered. Residues 260–380 (VSMMSSVSGC…ATYYNSYSVS (121 aa)) form the Sox C-terminal domain. Residues 323 to 328 (EFDQYL) form a required for beta-catenin-binding region.

Interacts with CTNNB1/beta-catenin; this interaction may lead to the proteasomal degradation of active CTNNB1 and thus inhibition of Wnt/beta-catenin-stimulated transcription. In terms of tissue distribution, predominantly expressed in ovary, lung and heart. In the ovary, restricted to oocytes (at protein level). Present both in mesenchymal and epithelial cells in some adult tissues, including ear.

It localises to the nucleus. Its subcellular location is the cytoplasm. Its function is as follows. Binds to and activates the CDH5 promoter, hence plays a role in the transcriptional regulation of genes expressed in the hemogenic endothelium and blocks further differentiation into blood precursors. May be required for the survival of both hematopoietic and endothelial precursors during specification. May play a role in skeletal myogenesis and up-regulate the expression of muscle markers, such as PAX3/PAX7 and Meox1. Competes with GATA4 for binding and activation of the FGF3 promoter. Represses Wnt/beta-catenin-stimulated transcription. Probably acts by targeting CTNNB1 to proteasomal degradation. Binds the DNA sequence 5'-AACAAT-3'. This is Transcription factor SOX-7 (Sox7) from Mus musculus (Mouse).